The chain runs to 485 residues: MPRFVDRVVIHARAGNGGNGCASVHREKFKPLGGPDGGNGGRGGSVILVVDPQVHTLLDFHFHPHVVAPSGKPGAGSNRDGAAGIDLEVRVPDGTVVLDENGRMLADLVGAGTRFEAAAGGRGGLGNAALASRARKAPGFALLGEKGQERDLTLELKTVADVGLIGFPSAGKSSLVSTISAAKPKIADYPFTTLVPNLGVVSAGENTYTVADVPGLIPGASEGRGLGLDFLRHLERCAVLVHVVDCATMEPGRDPISDIEALEAELAAYTPTLQGDSALGDLASRPRAVVLNKIDVPDARELADFVRDEVAGRFGWPVYEISTVSRDGLRPLIFALWEMVKKYRDAQPVAAPRRPIIRPIPVDESGFTISSDGEGGFIVRGTRPERWIAQTDFNNDEAVGYLGDRLARLGVEDELLKRGAKPGCAVTIGDVTFDWEPQTPAGVDVTMTGRGTDIRLEQTDRVGAAERKAARRERRQPGESGGEDS.

The 158-residue stretch at 2–159 (PRFVDRVVIH…RDLTLELKTV (158 aa)) folds into the Obg domain. Residues 160-341 (ADVGLIGFPS…LIFALWEMVK (182 aa)) enclose the OBG-type G domain. Residues 166–173 (GFPSAGKS), 191–195 (FTTLV), 212–215 (DVPG), 292–295 (NKID), and 322–324 (STV) each bind GTP. The Mg(2+) site is built by serine 173 and threonine 193. In terms of domain architecture, OCT spans 359-437 (PIPVDESGFT…IGDVTFDWEP (79 aa)). A disordered region spans residues 450–485 (RGTDIRLEQTDRVGAAERKAARRERRQPGESGGEDS). Positions 452-468 (TDIRLEQTDRVGAAERK) are enriched in basic and acidic residues.

It belongs to the TRAFAC class OBG-HflX-like GTPase superfamily. OBG GTPase family. As to quaternary structure, monomer. Mg(2+) is required as a cofactor.

It localises to the cytoplasm. In terms of biological role, an essential GTPase which binds GTP, GDP and possibly (p)ppGpp with moderate affinity, with high nucleotide exchange rates and a fairly low GTP hydrolysis rate. Plays a role in control of the cell cycle, stress response, ribosome biogenesis and in those bacteria that undergo differentiation, in morphogenesis control. The protein is GTPase Obg of Mycolicibacterium smegmatis (strain ATCC 700084 / mc(2)155) (Mycobacterium smegmatis).